A 389-amino-acid chain; its full sequence is Krueppel-like factor 17 (389 aa).

Disordered stretches follow at residues 1–48 (MYGR…SGVH) and 239–279 (LVSQ…GSSE). Polar residues predominate over residues 26-38 (AQDNENSAPILNM). Basic and acidic residues predominate over residues 264–278 (KNSRPQEGTGRRGSS). 3 consecutive C2H2-type zinc fingers follow at residues 283–307 (YCCN…QRKH), 313–337 (YSCN…MRVH), and 343–365 (YKCD…QKTH). A disordered region spans residues 356–389 (DHLKQHQKTHRPGPSDPQANNNNGEQDSPPAAGP). A compositionally biased stretch (polar residues) spans 372–381 (PQANNNNGEQ).

It belongs to the Sp1 C2H2-type zinc-finger protein family.

It is found in the nucleus. Its function is as follows. Transcription repressor that binds to the promoter of target genes and prevents their expression. Acts as a negative regulator of epithelial-mesenchymal transition and metastasis in breast cancer. Specifically binds the 5'-CACCC-3' sequence in the promoter of ID1, a key metastasis regulator in breast cancer, and repress its expression. May be a germ cell-specific transcription factor that plays important roles in spermatid differentiation and oocyte development. The protein is Krueppel-like factor 17 (KLF17) of Homo sapiens (Human).